A 302-amino-acid chain; its full sequence is tRNA-cytidine(32) 2-sulfurtransferase (302 aa).

Residues 45–50 (SGGKDS) carry the PP-loop motif motif. Residues C120, C123, and C211 each coordinate [4Fe-4S] cluster.

It belongs to the TtcA family. In terms of assembly, homodimer. Requires Mg(2+) as cofactor. The cofactor is [4Fe-4S] cluster.

The protein resides in the cytoplasm. The catalysed reaction is cytidine(32) in tRNA + S-sulfanyl-L-cysteinyl-[cysteine desulfurase] + AH2 + ATP = 2-thiocytidine(32) in tRNA + L-cysteinyl-[cysteine desulfurase] + A + AMP + diphosphate + H(+). It functions in the pathway tRNA modification. Catalyzes the ATP-dependent 2-thiolation of cytidine in position 32 of tRNA, to form 2-thiocytidine (s(2)C32). The sulfur atoms are provided by the cysteine/cysteine desulfurase (IscS) system. The sequence is that of tRNA-cytidine(32) 2-sulfurtransferase from Aeromonas salmonicida (strain A449).